The primary structure comprises 417 residues: Serine hydroxymethyltransferase 2 (417 aa).

(6S)-5,6,7,8-tetrahydrofolate contacts are provided by residues Leu-121 and 125 to 127 (GHL). Lys-230 bears the N6-(pyridoxal phosphate)lysine mark. 355-357 (SPF) provides a ligand contact to (6S)-5,6,7,8-tetrahydrofolate.

It belongs to the SHMT family. In terms of assembly, homodimer. It depends on pyridoxal 5'-phosphate as a cofactor.

The protein resides in the cytoplasm. The enzyme catalyses (6R)-5,10-methylene-5,6,7,8-tetrahydrofolate + glycine + H2O = (6S)-5,6,7,8-tetrahydrofolate + L-serine. It participates in one-carbon metabolism; tetrahydrofolate interconversion. The protein operates within amino-acid biosynthesis; glycine biosynthesis; glycine from L-serine: step 1/1. In terms of biological role, catalyzes the reversible interconversion of serine and glycine with tetrahydrofolate (THF) serving as the one-carbon carrier. This reaction serves as the major source of one-carbon groups required for the biosynthesis of purines, thymidylate, methionine, and other important biomolecules. Also exhibits THF-independent aldolase activity toward beta-hydroxyamino acids, producing glycine and aldehydes, via a retro-aldol mechanism. The polypeptide is Serine hydroxymethyltransferase 2 (Pseudomonas savastanoi pv. phaseolicola (strain 1448A / Race 6) (Pseudomonas syringae pv. phaseolicola (strain 1448A / Race 6))).